The following is a 390-amino-acid chain: Probable galacturonosyltransferase-like 9 (390 aa).

Over 1–10 the chain is Cytoplasmic; it reads MRLRFPMKSA. A helical; Signal-anchor for type II membrane protein transmembrane segment spans residues 11 to 31; that stretch reads VLAFAIFLVFIPLFSVGIRMI. Over 32–390 the chain is Lumenal; that stretch reads PGRLTAVSAT…SELTEDSSFF (359 aa). Asn205 and Asn223 each carry an N-linked (GlcNAc...) asparagine glycan.

This sequence belongs to the glycosyltransferase 8 family.

Its subcellular location is the golgi apparatus membrane. It participates in glycan metabolism; pectin biosynthesis. In terms of biological role, may be involved in pectin and/or xylans biosynthesis in cell walls. The sequence is that of Probable galacturonosyltransferase-like 9 (GATL9) from Arabidopsis thaliana (Mouse-ear cress).